We begin with the raw amino-acid sequence, 98 residues long: NADH-ubiquinone oxidoreductase chain 4L (98 aa).

3 consecutive transmembrane segments (helical) span residues 1–21 (MPYIYTNLFLAFLTSLLGMLI), 29–49 (SLLCLEGMMLSMFIMTSLTIL), and 61–81 (IILLVFAACEAAVGLALLVMV).

This sequence belongs to the complex I subunit 4L family. In terms of assembly, core subunit of respiratory chain NADH dehydrogenase (Complex I) which is composed of 45 different subunits.

The protein localises to the mitochondrion inner membrane. The catalysed reaction is a ubiquinone + NADH + 5 H(+)(in) = a ubiquinol + NAD(+) + 4 H(+)(out). Functionally, core subunit of the mitochondrial membrane respiratory chain NADH dehydrogenase (Complex I) which catalyzes electron transfer from NADH through the respiratory chain, using ubiquinone as an electron acceptor. Part of the enzyme membrane arm which is embedded in the lipid bilayer and involved in proton translocation. The polypeptide is NADH-ubiquinone oxidoreductase chain 4L (MT-ND4L) (Cephalopachus bancanus (Western tarsier)).